Consider the following 274-residue polypeptide: 2-dehydro-3-deoxyphosphooctonate aldolase (274 aa).

It belongs to the KdsA family.

The protein localises to the cytoplasm. The enzyme catalyses D-arabinose 5-phosphate + phosphoenolpyruvate + H2O = 3-deoxy-alpha-D-manno-2-octulosonate-8-phosphate + phosphate. It functions in the pathway carbohydrate biosynthesis; 3-deoxy-D-manno-octulosonate biosynthesis; 3-deoxy-D-manno-octulosonate from D-ribulose 5-phosphate: step 2/3. The protein operates within bacterial outer membrane biogenesis; lipopolysaccharide biosynthesis. The sequence is that of 2-dehydro-3-deoxyphosphooctonate aldolase from Legionella pneumophila (strain Corby).